The chain runs to 198 residues: Nucleoid occlusion factor SlmA (198 aa).

Residues 9-70 (RNRREEILQA…SLIEFIEDSL (62 aa)) enclose the HTH tetR-type domain. Positions 33 to 52 (TTAKLAANVGVSEAALYRHF) form a DNA-binding region, H-T-H motif. The stretch at 117–144 (EQDRLQGRINQLFERIEAQLRQVLKERK) forms a coiled coil.

It belongs to the nucleoid occlusion factor SlmA family. Homodimer. Interacts with FtsZ.

It is found in the cytoplasm. Its subcellular location is the nucleoid. Its function is as follows. Required for nucleoid occlusion (NO) phenomenon, which prevents Z-ring formation and cell division over the nucleoid. Acts as a DNA-associated cell division inhibitor that binds simultaneously chromosomal DNA and FtsZ, and disrupts the assembly of FtsZ polymers. SlmA-DNA-binding sequences (SBS) are dispersed on non-Ter regions of the chromosome, preventing FtsZ polymerization at these regions. This Serratia proteamaculans (strain 568) protein is Nucleoid occlusion factor SlmA.